Reading from the N-terminus, the 147-residue chain is Nucleoside diphosphate kinase (147 aa).

Residues Lys9, Arg85, Thr91, Arg102, and Asn112 each coordinate ATP. Residue His115 is the Pros-phosphohistidine intermediate of the active site.

The protein belongs to the NDK family. Requires Mg(2+) as cofactor.

The enzyme catalyses a 2'-deoxyribonucleoside 5'-diphosphate + ATP = a 2'-deoxyribonucleoside 5'-triphosphate + ADP. It catalyses the reaction a ribonucleoside 5'-diphosphate + ATP = a ribonucleoside 5'-triphosphate + ADP. Its function is as follows. Major role in the synthesis of nucleoside triphosphates other than ATP. The ATP gamma phosphate is transferred to the NDP beta phosphate via a ping-pong mechanism, using a phosphorylated active-site intermediate. The sequence is that of Nucleoside diphosphate kinase (NDK1) from Encephalitozoon cuniculi (strain GB-M1) (Microsporidian parasite).